A 108-amino-acid chain; its full sequence is Ig kappa chain V region BS-5 (108 aa).

A framework-1 region spans residues 1–23; the sequence is DVVMTQTPASVSEPVGGTVTIKC. Cystine bridges form between Cys23-Cys88 and Cys80-Gly108. Residues 24-34 are complementarity-determining-1; it reads QASQSIYSNLA. Positions 35–49 are framework-2; it reads WYQZKPGQPPKLLIY. The segment at 50–56 is complementarity-determining-2; the sequence is KASTLES. Positions 57–88 are framework-3; the sequence is GVPSRFKGSGSGTDFTLTISDLECADAATYFC. The interval 89–97 is complementarity-determining-3; the sequence is QGSBYTGTV. The tract at residues 98-107 is framework-4; the sequence is FGGGTEVVVK.

This is Ig kappa chain V region BS-5 from Oryctolagus cuniculus (Rabbit).